Consider the following 388-residue polypeptide: Valine--pyruvate aminotransferase (388 aa).

At Lys234 the chain carries N6-(pyridoxal phosphate)lysine.

The protein belongs to the class-I pyridoxal-phosphate-dependent aminotransferase family. Requires pyridoxal 5'-phosphate as cofactor.

It carries out the reaction L-valine + pyruvate = 3-methyl-2-oxobutanoate + L-alanine. This is Valine--pyruvate aminotransferase from Mycobacterium tuberculosis (strain ATCC 25618 / H37Rv).